Consider the following 375-residue polypeptide: Ribonuclease D (375 aa).

The region spanning 3–169 is the 3'-5' exonuclease domain; it reads YQMITTDDAL…LPITAKLMVE (167 aa). The region spanning 210 to 289 is the HRDC domain; sequence RTRQLACLQL…EKAQTLPEDA (80 aa).

The protein belongs to the RNase D family. It depends on a divalent metal cation as a cofactor.

The protein localises to the cytoplasm. It catalyses the reaction Exonucleolytic cleavage that removes extra residues from the 3'-terminus of tRNA to produce 5'-mononucleotides.. Exonuclease involved in the 3' processing of various precursor tRNAs. Initiates hydrolysis at the 3'-terminus of an RNA molecule and releases 5'-mononucleotides. This Escherichia coli (strain K12) protein is Ribonuclease D.